A 762-amino-acid polypeptide reads, in one-letter code: Lysyl oxidase homolog 2B (762 aa).

The N-terminal stretch at 1 to 20 (MLALWSISFVLLCSWRLSYA) is a signal peptide. SRCR domains follow at residues 53–154 (LRLA…VVCS), 183–292 (IRPI…VSCI), 316–417 (VRLR…VKCN), and 427–536 (LRLS…VSCS). 9 disulfides stabilise this stretch: C79/C143, C92/C153, C123/C133, C213/C281, C226/C291, C260/C270, C341/C406, C354/C416, and C385/C395. A glycan (N-linked (GlcNAc...) asparagine) is linked at N278. N447 carries N-linked (GlcNAc...) asparagine glycosylation. 3 cysteine pairs are disulfide-bonded: C456–C522, C469–C535, and C503–C513. The lysyl-oxidase like stretch occupies residues 540–742 (PDLVLNPQVV…WMYNCHIGGS (203 aa)). Ca(2+)-binding residues include D541 and L542. 4 disulfides stabilise this stretch: C565-C616, C571-C686, C648-C664, and C654-C676. Residues H617, H619, and H621 each coordinate Cu cation. N-linked (GlcNAc...) asparagine glycosylation occurs at N635. The segment at residues 644–680 (KASFCLEDSECDEGIEKRYECANFGEQGITVGCWDTY) is a cross-link (lysine tyrosylquinone (Lys-Tyr)). Y680 carries the post-translational modification 2',4',5'-topaquinone. Ca(2+) is bound by residues E713, D715, N718, and N719. The cysteines at positions 723 and 737 are disulfide-linked.

Belongs to the lysyl oxidase family. Cu cation serves as cofactor. Requires lysine tyrosylquinone residue as cofactor. In terms of processing, the lysine tyrosylquinone cross-link (LTQ) is generated by condensation of the epsilon-amino group of a lysine with a topaquinone produced by oxidation of tyrosine.

Its subcellular location is the secreted. The protein resides in the extracellular space. It is found in the extracellular matrix. It localises to the basement membrane. The protein localises to the nucleus. Its subcellular location is the chromosome. The protein resides in the endoplasmic reticulum. It catalyses the reaction L-lysyl-[protein] + O2 + H2O = (S)-2-amino-6-oxohexanoyl-[protein] + H2O2 + NH4(+). Mediates the post-translational oxidative deamination of lysine residues on target proteins leading to the formation of deaminated lysine (allysine). Acts as a transcription corepressor and specifically mediates deamination of trimethylated 'Lys-4' of histone H3 (H3K4me3), a specific tag for epigenetic transcriptional activation. Shows no activity against histone H3 when it is trimethylated on 'Lys-9' (H3K9me3) or 'Lys-27' (H3K27me3) or when 'Lys-4' is monomethylated (H3K4me1) or dimethylated (H3K4me2). Also mediates deamination of methylated TAF10, a member of the transcription factor IID (TFIID) complex, which induces release of TAF10 from promoters, leading to inhibition of TFIID-dependent transcription. LOXL2-mediated deamination of TAF10 results in transcriptional repression of genes required for embryonic stem cell pluripotency. Involved in epithelial to mesenchymal transition (EMT) and participates in repression of E-cadherin, probably by mediating deamination of histone H3. When secreted into the extracellular matrix, promotes cross-linking of extracellular matrix proteins by mediating oxidative deamination of peptidyl lysine residues in precursors to fibrous collagen and elastin. Acts as a regulator of sprouting angiogenesis, probably via collagen IV scaffolding. Acts as a regulator of chondrocyte differentiation, probably by regulating expression of factors that control chondrocyte differentiation. Required with loxl2a for correct expression of Sox2 and for neural differentiation. This Danio rerio (Zebrafish) protein is Lysyl oxidase homolog 2B (loxl2b).